The sequence spans 375 residues: Queuine tRNA-ribosyltransferase (375 aa).

Asp89 (proton acceptor) is an active-site residue. Substrate is bound by residues 89–93 (DSGGF), Asp143, Gln187, and Gly214. The interval 245–251 (GVGKPED) is RNA binding. Asp264 (nucleophile) is an active-site residue. Residues 269 to 273 (TRNAR) form an RNA binding; important for wobble base 34 recognition region. The Zn(2+) site is built by Cys302, Cys304, Cys307, and His333.

Belongs to the queuine tRNA-ribosyltransferase family. As to quaternary structure, homodimer. Within each dimer, one monomer is responsible for RNA recognition and catalysis, while the other monomer binds to the replacement base PreQ1. It depends on Zn(2+) as a cofactor.

The catalysed reaction is 7-aminomethyl-7-carbaguanine + guanosine(34) in tRNA = 7-aminomethyl-7-carbaguanosine(34) in tRNA + guanine. The protein operates within tRNA modification; tRNA-queuosine biosynthesis. Its function is as follows. Catalyzes the base-exchange of a guanine (G) residue with the queuine precursor 7-aminomethyl-7-deazaguanine (PreQ1) at position 34 (anticodon wobble position) in tRNAs with GU(N) anticodons (tRNA-Asp, -Asn, -His and -Tyr). Catalysis occurs through a double-displacement mechanism. The nucleophile active site attacks the C1' of nucleotide 34 to detach the guanine base from the RNA, forming a covalent enzyme-RNA intermediate. The proton acceptor active site deprotonates the incoming PreQ1, allowing a nucleophilic attack on the C1' of the ribose to form the product. After dissociation, two additional enzymatic reactions on the tRNA convert PreQ1 to queuine (Q), resulting in the hypermodified nucleoside queuosine (7-(((4,5-cis-dihydroxy-2-cyclopenten-1-yl)amino)methyl)-7-deazaguanosine). This chain is Queuine tRNA-ribosyltransferase, found in Klebsiella pneumoniae subsp. pneumoniae (strain ATCC 700721 / MGH 78578).